A 74-amino-acid chain; its full sequence is Small ribosomal subunit protein eS28 (74 aa).

This sequence belongs to the eukaryotic ribosomal protein eS28 family.

The chain is Small ribosomal subunit protein eS28 from Halorubrum lacusprofundi (strain ATCC 49239 / DSM 5036 / JCM 8891 / ACAM 34).